Here is a 374-residue protein sequence, read N- to C-terminus: Nucleosome assembly protein 1;1 (374 aa).

Residues 26–80 (VNALKNKLQDITGKPTNVLECLSPNVRKRVEVLKEIQSQHDELEAKFYEERAVLE) adopt a coiled-coil conformation. The Nuclear export signal motif lies at 47–62 (LSPNVRKRVEVLKEIQ). A Nuclear localization signal motif is present at residues 223 to 228 (KKKPKK). Positions 299 to 339 (AAEDDFADLEDDDDDDEEDDDDEDEEEEDDEDDEDEEDEDD) are enriched in acidic residues. The segment at 299-374 (AAEDDFADLE…GERPPECKQQ (76 aa)) is disordered. The span at 343 to 355 (KKKSSAVRKRGVR) shows a compositional bias: basic residues. At Cys-371 the chain carries Cysteine methyl ester. Cys-371 is lipidated: S-farnesyl cysteine. A propeptide spans 372-374 (KQQ) (removed in mature form).

Belongs to the nucleosome assembly protein (NAP) family. As to quaternary structure, binds preferentially histones H4 and H1 in vitro. Interacts with CYCB1;1.

The protein localises to the nucleus. The protein resides in the cytoplasm. In terms of biological role, may modulate chromatin structure by regulation of nucleosome assembly/disassembly. Could function together with B-type cyclins in the regulation of microtubule dynamics. The polypeptide is Nucleosome assembly protein 1;1 (NAP1;1) (Nicotiana tabacum (Common tobacco)).